Here is a 262-residue protein sequence, read N- to C-terminus: tRNA (guanine-N(1)-)-methyltransferase (262 aa).

S-adenosyl-L-methionine-binding positions include Gly-113 and 137–142; that span reads IGDYVL.

The protein belongs to the RNA methyltransferase TrmD family. As to quaternary structure, homodimer.

It is found in the cytoplasm. The enzyme catalyses guanosine(37) in tRNA + S-adenosyl-L-methionine = N(1)-methylguanosine(37) in tRNA + S-adenosyl-L-homocysteine + H(+). In terms of biological role, specifically methylates guanosine-37 in various tRNAs. This is tRNA (guanine-N(1)-)-methyltransferase from Thermobifida fusca (strain YX).